A 251-amino-acid polypeptide reads, in one-letter code: tRNA pseudouridine synthase A (251 aa).

The Nucleophile role is filled by Asp52. Position 113 (Tyr113) interacts with substrate.

It belongs to the tRNA pseudouridine synthase TruA family. Homodimer.

The catalysed reaction is uridine(38/39/40) in tRNA = pseudouridine(38/39/40) in tRNA. Functionally, formation of pseudouridine at positions 38, 39 and 40 in the anticodon stem and loop of transfer RNAs. This is tRNA pseudouridine synthase A from Brucella anthropi (strain ATCC 49188 / DSM 6882 / CCUG 24695 / JCM 21032 / LMG 3331 / NBRC 15819 / NCTC 12168 / Alc 37) (Ochrobactrum anthropi).